The following is a 634-amino-acid chain: Threonine--tRNA ligase (634 aa).

A TGS domain is found at 1–61 (MINITLPDGS…DHDASLRIIT (61 aa)). Residues 243-534 (DHRRIGKAQD…LIEHHAGAFP (292 aa)) are catalytic. 3 residues coordinate Zn(2+): cysteine 334, histidine 385, and histidine 511.

The protein belongs to the class-II aminoacyl-tRNA synthetase family. In terms of assembly, homodimer. The cofactor is Zn(2+).

The protein localises to the cytoplasm. It catalyses the reaction tRNA(Thr) + L-threonine + ATP = L-threonyl-tRNA(Thr) + AMP + diphosphate + H(+). Functionally, catalyzes the attachment of threonine to tRNA(Thr) in a two-step reaction: L-threonine is first activated by ATP to form Thr-AMP and then transferred to the acceptor end of tRNA(Thr). Also edits incorrectly charged L-seryl-tRNA(Thr). The polypeptide is Threonine--tRNA ligase (Xanthomonas oryzae pv. oryzae (strain MAFF 311018)).